A 188-amino-acid polypeptide reads, in one-letter code: NAD(P)H-quinone oxidoreductase subunit J (188 aa).

Belongs to the complex I 30 kDa subunit family. As to quaternary structure, NDH-1 can be composed of about 15 different subunits; different subcomplexes with different compositions have been identified which probably have different functions.

Its subcellular location is the cellular thylakoid membrane. The catalysed reaction is a plastoquinone + NADH + (n+1) H(+)(in) = a plastoquinol + NAD(+) + n H(+)(out). The enzyme catalyses a plastoquinone + NADPH + (n+1) H(+)(in) = a plastoquinol + NADP(+) + n H(+)(out). In terms of biological role, NDH-1 shuttles electrons from an unknown electron donor, via FMN and iron-sulfur (Fe-S) centers, to quinones in the respiratory and/or the photosynthetic chain. The immediate electron acceptor for the enzyme in this species is believed to be plastoquinone. Couples the redox reaction to proton translocation, and thus conserves the redox energy in a proton gradient. Cyanobacterial NDH-1 also plays a role in inorganic carbon-concentration. This chain is NAD(P)H-quinone oxidoreductase subunit J, found in Parasynechococcus marenigrum (strain WH8102).